A 700-amino-acid chain; its full sequence is Elongation factor G (700 aa).

In terms of domain architecture, tr-type G spans 8 to 290 (ERYRNIGISA…GVIDFMPSPI (283 aa)). GTP contacts are provided by residues 17-24 (AHIDAGKT), 88-92 (DTPGH), and 142-145 (NKMD).

This sequence belongs to the TRAFAC class translation factor GTPase superfamily. Classic translation factor GTPase family. EF-G/EF-2 subfamily.

It is found in the cytoplasm. In terms of biological role, catalyzes the GTP-dependent ribosomal translocation step during translation elongation. During this step, the ribosome changes from the pre-translocational (PRE) to the post-translocational (POST) state as the newly formed A-site-bound peptidyl-tRNA and P-site-bound deacylated tRNA move to the P and E sites, respectively. Catalyzes the coordinated movement of the two tRNA molecules, the mRNA and conformational changes in the ribosome. This Methylibium petroleiphilum (strain ATCC BAA-1232 / LMG 22953 / PM1) protein is Elongation factor G.